A 365-amino-acid polypeptide reads, in one-letter code: Phosphatidylcholine:ceramide cholinephosphotransferase 2 (365 aa).

A compositionally biased stretch (basic and acidic residues) spans 1 to 14; it reads MDIIETAKLEEHLE. The segment at 1 to 52 is disordered; it reads MDIIETAKLEEHLENQPSDPTNTYARPAEPVEEENKNGNGKPKSLSSGLRKG. Positions 15–24 are enriched in polar residues; sequence NQPSDPTNTY. 4 helical membrane-spanning segments follow: residues 80-100, 128-148, 159-179, and 206-226; these read GIAF…ITVV, FSVS…QWLF, FCFI…VTTL, and LISG…DFLF. Residue His229 is part of the active site. The helical transmembrane segment at 248–268 threads the bilayer; that stretch reads FWWYHLICWLLSAAGIICILV. Residues His272 and Asp276 contribute to the active site. The chain crosses the membrane as a helical span at residues 275–295; the sequence is IDVIIAYYITTRLFWWYHSMA. Over 296–365 the chain is Cytoplasmic; sequence NEKNLKVSSQ…KIGEDNEKST (70 aa). Residues Cys331, Cys332, Cys343, and Cys348 are each lipidated (S-palmitoyl cysteine).

The protein belongs to the sphingomyelin synthase family. Palmitoylated on Cys-331, Cys-332, Cys-343 and Cys-348; which plays an important role in plasma membrane localization. Brain, heart, kidney, liver, muscle and stomach. Also expressed in a number of cell lines such as carcinoma HeLa cells, hepatoma Hep-G2 cells, and colon carcinoma Caco-2 cells.

It localises to the cell membrane. It is found in the golgi apparatus membrane. The catalysed reaction is an N-acylsphing-4-enine + a 1,2-diacyl-sn-glycero-3-phosphocholine = a sphingomyelin + a 1,2-diacyl-sn-glycerol. The enzyme catalyses an N-acylsphinganine + a 1,2-diacyl-sn-glycero-3-phosphocholine = an N-acylsphinganine-1-phosphocholine + a 1,2-diacyl-sn-glycerol. It catalyses the reaction an N-acyl-(4R)-4-hydroxysphinganine + a 1,2-diacyl-sn-glycero-3-phosphocholine = an N-acyl-(4R)-4-hydroxysphinganine-phosphocholine + a 1,2-diacyl-sn-glycerol. It carries out the reaction an N-acylsphinganine + a 1,2-diacyl-sn-glycero-3-phosphoethanolamine = an N-acylsphinganine-1-phosphoethanolamine + a 1,2-diacyl-sn-glycerol. The catalysed reaction is an N-acyl-(4R)-4-hydroxysphinganine + a 1,2-diacyl-sn-glycero-3-phosphoethanolamine = an N-acyl-(4R)-4-hydroxysphinganine-1-phosphoethanolamine + a 1,2-diacyl-sn-glycerol. The enzyme catalyses an N-acylsphing-4-enine + a 1,2-diacyl-sn-glycero-3-phosphoethanolamine = an N-acylsphing-4-enine 1-phosphoethanolamine + a 1,2-diacyl-sn-glycerol. It catalyses the reaction 1,2-dihexadecanoyl-sn-glycero-3-phosphocholine + an N-acylsphing-4-enine = 1,2-dihexadecanoyl-sn-glycerol + a sphingomyelin. It carries out the reaction 1-(9Z-octadecenoyl)-2-acyl-sn-3-glycerol + a sphingomyelin = a 1-(9Z-octadecenoyl)-2-acyl-sn-glycero-3-phosphocholine + an N-acylsphing-4-enine. The catalysed reaction is N-hexadecanoylsphinganine + a 1,2-diacyl-sn-glycero-3-phosphocholine = N-hexadecanoyl-sphinganine-1-phosphocholine + a 1,2-diacyl-sn-glycerol. The enzyme catalyses N-hexadecanoyl-(4R)-hydroxysphinganine + a 1,2-diacyl-sn-glycero-3-phosphocholine = N-hexadecanoyl-(4R)-hydroxysphinganine-phosphocholine + a 1,2-diacyl-sn-glycerol. It catalyses the reaction N-hexadecanoylsphinganine + a 1,2-diacyl-sn-glycero-3-phosphoethanolamine = N-hexadecanoyl-sphinganine-1-phosphoethanolamine + a 1,2-diacyl-sn-glycerol. It carries out the reaction N-hexadecanoyl-(4R)-hydroxysphinganine + a 1,2-diacyl-sn-glycero-3-phosphoethanolamine = N-hexadecanoyl-(4R)-hydroxysphinganine-1-phosphoethanolamine + a 1,2-diacyl-sn-glycerol. Its pathway is sphingolipid metabolism. Its activity is regulated as follows. Inhibited by bacterial PC-phospholipase C inhibitor D609. Functionally, sphingomyelin synthase that primarily contributes to sphingomyelin synthesis and homeostasis at the plasma membrane. Catalyzes the reversible transfer of phosphocholine moiety in sphingomyelin biosynthesis: in the forward reaction transfers phosphocholine head group of phosphatidylcholine (PC) on to ceramide (CER) to form ceramide phosphocholine (sphingomyelin, SM) and diacylglycerol (DAG) as by-product, and in the reverse reaction transfers phosphocholine from SM to DAG to form PC and CER. The direction of the reaction appears to depend on the levels of CER and DAG in the plasma membrane. Does not use free phosphorylcholine or CDP-choline as donors. Can also transfer phosphoethanolamine head group of phosphatidylethanolamine (PE) on to ceramide (CER) to form ceramide phosphoethanolamine (CPE). Regulates receptor-mediated signal transduction via mitogenic DAG and proapoptotic CER, as well as via SM, a structural component of membrane rafts that serve as platforms for signal transduction and protein sorting. To a lesser extent, plays a role in secretory transport via regulation of DAG pool at the Golgi apparatus and its downstream effects on PRKD1. Required for normal bone matrix mineralization. This is Phosphatidylcholine:ceramide cholinephosphotransferase 2 from Homo sapiens (Human).